The following is a 449-amino-acid chain: C4-dicarboxylate transport protein (449 aa).

Residues 1–20 (MSALTESFGPVPSAKSKPPA) form a disordered region. The segment covering 10–20 (PVPSAKSKPPA) has biased composition (low complexity). A run of 8 helical transmembrane segments spans residues 28–48 (LLYL…WLSP), 66–86 (LIKM…IAHI), 101–121 (LYFE…GNVV), 167–187 (GDIL…MTLG), 205–225 (FGVI…AMAF), 241–261 (LIAV…GLIA), 326–346 (IYMT…LTWT), and 370–390 (FITL…GMAI).

Belongs to the dicarboxylate/amino acid:cation symporter (DAACS) (TC 2.A.23) family.

The protein resides in the cell inner membrane. Functionally, responsible for the transport of dicarboxylates such as succinate, fumarate, and malate from the periplasm across the membrane. This Rhodopseudomonas palustris (strain BisB18) protein is C4-dicarboxylate transport protein.